The sequence spans 172 residues: Sec-independent protein translocase protein TatB (172 aa).

The helical transmembrane segment at 1–21 (MFDIGWSELLVIGVVALIAIG) threads the bilayer.

It belongs to the TatB family. As to quaternary structure, the Tat system comprises two distinct complexes: a TatABC complex, containing multiple copies of TatA, TatB and TatC subunits, and a separate TatA complex, containing only TatA subunits. Substrates initially bind to the TatABC complex, which probably triggers association of the separate TatA complex to form the active translocon.

Its subcellular location is the cell inner membrane. Its function is as follows. Part of the twin-arginine translocation (Tat) system that transports large folded proteins containing a characteristic twin-arginine motif in their signal peptide across membranes. Together with TatC, TatB is part of a receptor directly interacting with Tat signal peptides. TatB may form an oligomeric binding site that transiently accommodates folded Tat precursor proteins before their translocation. The chain is Sec-independent protein translocase protein TatB from Rhodopseudomonas palustris (strain BisB18).